We begin with the raw amino-acid sequence, 830 residues long: Prolactin receptor (830 aa).

The first 23 residues, 1-23 (MKQKLRSSVQIILLFALTAVGLT), serve as a signal peptide directing secretion. Residues 24–439 (GQSYPGKPKI…QIPTDFRIKD (416 aa)) are Extracellular-facing. Fibronectin type-III domains follow at residues 30–128 (KPKI…VQPD), 129–228 (APVN…IPNG), 231–331 (PPEK…IVQT), and 333–434 (PPVN…IPTD). A disulfide bond links cysteine 36 and cysteine 46. N-linked (GlcNAc...) asparagine glycosylation occurs at asparagine 59. The cysteines at positions 75 and 86 are disulfide-linked. Residues asparagine 91, asparagine 100, asparagine 112, asparagine 132, asparagine 263, asparagine 304, asparagine 316, and asparagine 336 are each glycosylated (N-linked (GlcNAc...) asparagine). Residues aspartate 415 and histidine 417 each contribute to the Zn(2+) site. The WSXWS motif motif lies at 420-424 (WSEWS). A helical transmembrane segment spans residues 440–460 (MVVWIIVGVLSSLICLVMSWT). Residues 461 to 830 (MVLKGYRMIA…DPSSFIPAFK (370 aa)) are Cytoplasmic-facing. The Box 1 motif signature appears at 472-480 (ILPPVPGPK).

The protein belongs to the type I cytokine receptor family. Type 1 subfamily.

Its subcellular location is the membrane. In terms of biological role, this is a receptor for the anterior pituitary hormone prolactin. This Columba livia (Rock dove) protein is Prolactin receptor (PRLR).